A 115-amino-acid chain; its full sequence is T cell receptor beta variable 7-7 (115 aa).

An N-terminal signal peptide occupies residues 1 to 21; the sequence is MGTSLLCWVVLGFLGTDHTGA. The region spanning 22-115 is the Ig-like domain; it reads GVSQSPRYKV…SAMYRCASSL (94 aa). C42 and C111 are disulfide-bonded.

In terms of assembly, alpha-beta TR is a heterodimer composed of an alpha and beta chain; disulfide-linked. The alpha-beta TR is associated with the transmembrane signaling CD3 coreceptor proteins to form the TR-CD3 (TcR or TCR). The assembly of alpha-beta TR heterodimers with CD3 occurs in the endoplasmic reticulum where a single alpha-beta TR heterodimer associates with one CD3D-CD3E heterodimer, one CD3G-CD3E heterodimer and one CD247 homodimer forming a stable octameric structure. CD3D-CD3E and CD3G-CD3E heterodimers preferentially associate with TR alpha and TR beta chains, respectively. The association of the CD247 homodimer is the last step of TcR assembly in the endoplasmic reticulum and is required for transport to the cell surface.

Its subcellular location is the cell membrane. In terms of biological role, v region of the variable domain of T cell receptor (TR) beta chain that participates in the antigen recognition. Alpha-beta T cell receptors are antigen specific receptors which are essential to the immune response and are present on the cell surface of T lymphocytes. Recognize peptide-major histocompatibility (MH) (pMH) complexes that are displayed by antigen presenting cells (APC), a prerequisite for efficient T cell adaptive immunity against pathogens. Binding of alpha-beta TR to pMH complex initiates TR-CD3 clustering on the cell surface and intracellular activation of LCK that phosphorylates the ITAM motifs of CD3G, CD3D, CD3E and CD247 enabling the recruitment of ZAP70. In turn ZAP70 phosphorylates LAT, which recruits numerous signaling molecules to form the LAT signalosome. The LAT signalosome propagates signal branching to three major signaling pathways, the calcium, the mitogen-activated protein kinase (MAPK) kinase and the nuclear factor NF-kappa-B (NF-kB) pathways, leading to the mobilization of transcription factors that are critical for gene expression and essential for T cell growth and differentiation. The T cell repertoire is generated in the thymus, by V-(D)-J rearrangement. This repertoire is then shaped by intrathymic selection events to generate a peripheral T cell pool of self-MH restricted, non-autoaggressive T cells. Post-thymic interaction of alpha-beta TR with the pMH complexes shapes TR structural and functional avidity. The sequence is that of T cell receptor beta variable 7-7 from Homo sapiens (Human).